A 150-amino-acid polypeptide reads, in one-letter code: Putative pre-16S rRNA nuclease (150 aa).

It belongs to the YqgF nuclease family.

It localises to the cytoplasm. Could be a nuclease involved in processing of the 5'-end of pre-16S rRNA. This chain is Putative pre-16S rRNA nuclease, found in Chlamydia abortus (strain DSM 27085 / S26/3) (Chlamydophila abortus).